The primary structure comprises 434 residues: Eukaryotic translation initiation factor 3 subunit E (434 aa).

Residues 219-392 (FFNHPKGRDL…GHVVMGTQPL (174 aa)) enclose the PCI domain.

The protein belongs to the eIF-3 subunit E family. In terms of assembly, component of the eukaryotic translation initiation factor 3 (eIF-3) complex. The eIF-3 complex interacts with pix. Interacts with mxt.

It localises to the cytoplasm. In terms of biological role, component of the eukaryotic translation initiation factor 3 (eIF-3) complex, which is involved in protein synthesis of a specialized repertoire of mRNAs and, together with other initiation factors, stimulates binding of mRNA and methionyl-tRNAi to the 40S ribosome. The eIF-3 complex specifically targets and initiates translation of a subset of mRNAs involved in cell proliferation. The sequence is that of Eukaryotic translation initiation factor 3 subunit E (eIF3-S6) from Drosophila grimshawi (Hawaiian fruit fly).